The primary structure comprises 228 residues: Deoxyguanosine kinase (228 aa).

8–16 (GPIGAGKSS) lines the ATP pocket. Substrate is bound by residues E32, Y44, and Q55. The active-site Proton acceptor is D78. 3 residues coordinate substrate: R79, D84, and E149.

Belongs to the DCK/DGK family. Heterodimer of a deoxyadenosine (DAK) and a deoxyguanosine kinase (DGK).

The catalysed reaction is 2'-deoxyguanosine + ATP = dGMP + ADP + H(+). DGK/DAK plays an essential role in generating the deoxyribonucleotide precursors, dGTP and dATP, for DNA metabolism. The sequence is that of Deoxyguanosine kinase from Lactobacillus acidophilus (strain ATCC 700396 / NCK56 / N2 / NCFM).